Reading from the N-terminus, the 378-residue chain is Erythronate-4-phosphate dehydrogenase (378 aa).

2 residues coordinate substrate: Ser45 and Thr66. NAD(+)-binding residues include Asp146 and Thr175. Arg208 is an active-site residue. Residue Asp232 coordinates NAD(+). Glu237 is an active-site residue. His254 acts as the Proton donor in catalysis. Gly257 provides a ligand contact to NAD(+). Tyr258 is a substrate binding site.

The protein belongs to the D-isomer specific 2-hydroxyacid dehydrogenase family. PdxB subfamily. As to quaternary structure, homodimer.

Its subcellular location is the cytoplasm. It catalyses the reaction 4-phospho-D-erythronate + NAD(+) = (R)-3-hydroxy-2-oxo-4-phosphooxybutanoate + NADH + H(+). The protein operates within cofactor biosynthesis; pyridoxine 5'-phosphate biosynthesis; pyridoxine 5'-phosphate from D-erythrose 4-phosphate: step 2/5. In terms of biological role, catalyzes the oxidation of erythronate-4-phosphate to 3-hydroxy-2-oxo-4-phosphonooxybutanoate. The chain is Erythronate-4-phosphate dehydrogenase from Citrobacter koseri (strain ATCC BAA-895 / CDC 4225-83 / SGSC4696).